The chain runs to 235 residues: Thiopurine S-methyltransferase (235 aa).

S-adenosyl-L-methionine-binding residues include Trp13, Leu48, Glu69, and Arg126. Positions 199-235 (PDPQNGAPRRVEHKVYQLTGKRPASPEADGRAAETED) are disordered. Positions 226 to 235 (ADGRAAETED) are enriched in basic and acidic residues.

The protein belongs to the class I-like SAM-binding methyltransferase superfamily. TPMT family.

It localises to the cytoplasm. It catalyses the reaction S-adenosyl-L-methionine + a thiopurine = S-adenosyl-L-homocysteine + a thiopurine S-methylether.. This Stutzerimonas stutzeri (strain A1501) (Pseudomonas stutzeri) protein is Thiopurine S-methyltransferase.